Reading from the N-terminus, the 307-residue chain is Pantothenate kinase (307 aa).

87 to 94 contacts ATP; that stretch reads GSVAVGKS.

It belongs to the prokaryotic pantothenate kinase family.

It localises to the cytoplasm. It carries out the reaction (R)-pantothenate + ATP = (R)-4'-phosphopantothenate + ADP + H(+). The protein operates within cofactor biosynthesis; coenzyme A biosynthesis; CoA from (R)-pantothenate: step 1/5. The chain is Pantothenate kinase from Vibrio vulnificus (strain YJ016).